Here is a 175-residue protein sequence, read N- to C-terminus: Large ribosomal subunit protein uL6 (175 aa).

Belongs to the universal ribosomal protein uL6 family. In terms of assembly, part of the 50S ribosomal subunit.

Functionally, this protein binds to the 23S rRNA, and is important in its secondary structure. It is located near the subunit interface in the base of the L7/L12 stalk, and near the tRNA binding site of the peptidyltransferase center. The sequence is that of Large ribosomal subunit protein uL6 from Xanthomonas oryzae pv. oryzae (strain MAFF 311018).